Consider the following 117-residue polypeptide: Appetite-regulating hormone (117 aa).

The signal sequence occupies residues 1-23; the sequence is MVSSATICSLLLLSMLWMDMAMA. Ser-26 carries the O-decanoyl serine; alternate lipid modification. The O-hexanoyl serine; alternate moiety is linked to residue Ser-26. The O-octanoyl serine; alternate moiety is linked to residue Ser-26. Positions 28 to 68 are disordered; that stretch reads LSPEHQKAQQRKESKKPPAKLQPRALEGWLHPEDRGQAEEA. Over residues 31–43 the composition is skewed to basic and acidic residues; the sequence is EHQKAQQRKESKK. Positions 52–75 are cleaved as a propeptide — removed in mature form; that stretch reads ALEGWLHPEDRGQAEEAEEELEIR. At Leu-98 the chain carries Leucine amide. The propeptide at 99–117 is removed in mature form; it reads GKFLQDILWEEVKEAPANK.

It belongs to the motilin family. O-octanoylated by GOAT/MBOAT4. O-octanoylation is essential for ghrelin activity. The replacement of Ser-26 by aromatic tryptophan preserves ghrelin activity. In terms of processing, amidation of Leu-98 is essential for obestatin activity. Ghrelin is broadly expressed with higher expression in the stomach. Very low levels are detected in the hypothalamus, heart, lung, pancreas, intestine and adipose tissue. Obestatin is most highly expressed in jejunum, and also found in duodenum, stomach, pituitary, ileum, liver, hypothalamus and heart. Expressed in low levels in pancreas, cerebellum, cerebrum, kidney, testis, ovary colon and lung.

The protein resides in the secreted. Its function is as follows. Ghrelin is the ligand for growth hormone secretagogue receptor type 1 (GHSR). Induces the release of growth hormone from the pituitary. Has an appetite-stimulating effect, induces adiposity and stimulates gastric acid secretion. Involved in growth regulation. In terms of biological role, obestatin may be the ligand for GPR39. May have an appetite-reducing effect resulting in decreased food intake. May reduce gastric emptying activity and jejunal motility. The chain is Appetite-regulating hormone (Ghrl) from Rattus norvegicus (Rat).